A 361-amino-acid chain; its full sequence is Queuine tRNA-ribosyltransferase (361 aa).

The active-site Proton acceptor is aspartate 92. Substrate is bound by residues 92–96 (DSGGF), aspartate 146, glutamine 189, and glycine 216. Residues 247–253 (GVGKPAD) are RNA binding. Aspartate 266 (nucleophile) is an active-site residue. Residues 271 to 275 (TRSGR) form an RNA binding; important for wobble base 34 recognition region. The Zn(2+) site is built by cysteine 304, cysteine 306, cysteine 309, and histidine 335.

It belongs to the queuine tRNA-ribosyltransferase family. In terms of assembly, homodimer. Within each dimer, one monomer is responsible for RNA recognition and catalysis, while the other monomer binds to the replacement base PreQ1. Requires Zn(2+) as cofactor.

The enzyme catalyses 7-aminomethyl-7-carbaguanine + guanosine(34) in tRNA = 7-aminomethyl-7-carbaguanosine(34) in tRNA + guanine. Its pathway is tRNA modification; tRNA-queuosine biosynthesis. Catalyzes the base-exchange of a guanine (G) residue with the queuine precursor 7-aminomethyl-7-deazaguanine (PreQ1) at position 34 (anticodon wobble position) in tRNAs with GU(N) anticodons (tRNA-Asp, -Asn, -His and -Tyr). Catalysis occurs through a double-displacement mechanism. The nucleophile active site attacks the C1' of nucleotide 34 to detach the guanine base from the RNA, forming a covalent enzyme-RNA intermediate. The proton acceptor active site deprotonates the incoming PreQ1, allowing a nucleophilic attack on the C1' of the ribose to form the product. After dissociation, two additional enzymatic reactions on the tRNA convert PreQ1 to queuine (Q), resulting in the hypermodified nucleoside queuosine (7-(((4,5-cis-dihydroxy-2-cyclopenten-1-yl)amino)methyl)-7-deazaguanosine). The protein is Queuine tRNA-ribosyltransferase of Rickettsia akari (strain Hartford).